We begin with the raw amino-acid sequence, 146 residues long: D-aminoacyl-tRNA deacylase (146 aa).

The Gly-cisPro motif, important for rejection of L-amino acids motif lies at 137–138 (GP).

The protein belongs to the DTD family. Homodimer.

It localises to the cytoplasm. The catalysed reaction is glycyl-tRNA(Ala) + H2O = tRNA(Ala) + glycine + H(+). It carries out the reaction a D-aminoacyl-tRNA + H2O = a tRNA + a D-alpha-amino acid + H(+). Its function is as follows. An aminoacyl-tRNA editing enzyme that deacylates mischarged D-aminoacyl-tRNAs. Also deacylates mischarged glycyl-tRNA(Ala), protecting cells against glycine mischarging by AlaRS. Acts via tRNA-based rather than protein-based catalysis; rejects L-amino acids rather than detecting D-amino acids in the active site. By recycling D-aminoacyl-tRNA to D-amino acids and free tRNA molecules, this enzyme counteracts the toxicity associated with the formation of D-aminoacyl-tRNA entities in vivo and helps enforce protein L-homochirality. The protein is D-aminoacyl-tRNA deacylase of Hahella chejuensis (strain KCTC 2396).